Consider the following 150-residue polypeptide: Cytochrome c-type biogenesis protein CcmE (150 aa).

At 1 to 9 (MRNLKKTRR) the chain is on the cytoplasmic side. The helical; Signal-anchor for type II membrane protein transmembrane segment at 10–30 (IQILLVAGGALVLSTALIGYG) threads the bilayer. The Periplasmic segment spans residues 31–150 (MRDGINFFRA…VYRDPAQPEG (120 aa)). Heme is bound by residues His123 and Tyr127.

The protein belongs to the CcmE/CycJ family.

The protein localises to the cell inner membrane. Its function is as follows. Heme chaperone required for the biogenesis of c-type cytochromes. Transiently binds heme delivered by CcmC and transfers the heme to apo-cytochromes in a process facilitated by CcmF and CcmH. The chain is Cytochrome c-type biogenesis protein CcmE from Rhodobacter capsulatus (strain ATCC BAA-309 / NBRC 16581 / SB1003).